The primary structure comprises 358 residues: Peptide chain release factor 1 (358 aa).

Residue Q233 is modified to N5-methylglutamine.

It belongs to the prokaryotic/mitochondrial release factor family. Methylated by PrmC. Methylation increases the termination efficiency of RF1.

It is found in the cytoplasm. Its function is as follows. Peptide chain release factor 1 directs the termination of translation in response to the peptide chain termination codons UAG and UAA. The chain is Peptide chain release factor 1 from Staphylococcus aureus (strain MSSA476).